The following is a 428-amino-acid chain: Tyrosine--tRNA ligase (428 aa).

Position 41 (tyrosine 41) interacts with L-tyrosine. The short motif at 46 to 55 (PTADSLHLGH) is the 'HIGH' region element. L-tyrosine-binding residues include tyrosine 179 and glutamine 183. The 'KMSKS' region motif lies at 239-243 (KFGKT). Lysine 242 provides a ligand contact to ATP. Residues 361–418 (ADLMQALVDSELQPSRGQARKTIASNAITINGEKQSDPEYTFSDSDRLFGRYTLLRRG) enclose the S4 RNA-binding domain.

This sequence belongs to the class-I aminoacyl-tRNA synthetase family. TyrS type 1 subfamily. Homodimer.

The protein localises to the cytoplasm. It carries out the reaction tRNA(Tyr) + L-tyrosine + ATP = L-tyrosyl-tRNA(Tyr) + AMP + diphosphate + H(+). In terms of biological role, catalyzes the attachment of tyrosine to tRNA(Tyr) in a two-step reaction: tyrosine is first activated by ATP to form Tyr-AMP and then transferred to the acceptor end of tRNA(Tyr). The chain is Tyrosine--tRNA ligase from Cronobacter sakazakii (strain ATCC BAA-894) (Enterobacter sakazakii).